The sequence spans 122 residues: Large ribosomal subunit protein uL14 (122 aa).

Belongs to the universal ribosomal protein uL14 family. Part of the 50S ribosomal subunit. Forms a cluster with proteins L3 and L19. In the 70S ribosome, L14 and L19 interact and together make contacts with the 16S rRNA in bridges B5 and B8.

Binds to 23S rRNA. Forms part of two intersubunit bridges in the 70S ribosome. This Acetivibrio thermocellus (strain ATCC 27405 / DSM 1237 / JCM 9322 / NBRC 103400 / NCIMB 10682 / NRRL B-4536 / VPI 7372) (Clostridium thermocellum) protein is Large ribosomal subunit protein uL14.